The chain runs to 427 residues: Light-independent protochlorophyllide reductase subunit N (427 aa).

Residues cysteine 32, cysteine 57, and cysteine 118 each contribute to the [4Fe-4S] cluster site.

This sequence belongs to the BchN/ChlN family. As to quaternary structure, protochlorophyllide reductase is composed of three subunits; BchL, BchN and BchB. Forms a heterotetramer of two BchB and two BchN subunits. [4Fe-4S] cluster serves as cofactor.

The enzyme catalyses chlorophyllide a + oxidized 2[4Fe-4S]-[ferredoxin] + 2 ADP + 2 phosphate = protochlorophyllide a + reduced 2[4Fe-4S]-[ferredoxin] + 2 ATP + 2 H2O. It participates in porphyrin-containing compound metabolism; bacteriochlorophyll biosynthesis (light-independent). Component of the dark-operative protochlorophyllide reductase (DPOR) that uses Mg-ATP and reduced ferredoxin to reduce ring D of protochlorophyllide (Pchlide) to form chlorophyllide a (Chlide). This reaction is light-independent. The NB-protein (BchN-BchB) is the catalytic component of the complex. The sequence is that of Light-independent protochlorophyllide reductase subunit N from Rubrivivax gelatinosus (strain NBRC 100245 / IL144).